A 395-amino-acid polypeptide reads, in one-letter code: Glutamate N-acetyltransferase (395 aa).

Substrate contacts are provided by Thr146, Lys169, Thr180, Glu263, Asn390, and Thr395. The active-site Nucleophile is Thr180.

It belongs to the ArgJ family. Heterotetramer of two alpha and two beta chains.

It localises to the cytoplasm. The enzyme catalyses N(2)-acetyl-L-ornithine + L-glutamate = N-acetyl-L-glutamate + L-ornithine. It participates in amino-acid biosynthesis; L-arginine biosynthesis; L-ornithine and N-acetyl-L-glutamate from L-glutamate and N(2)-acetyl-L-ornithine (cyclic): step 1/1. Catalyzes the transfer of the acetyl group from N(2)-acetylornithine to glutamate, forming N-acetylglutamate and L-ornithine. This Methanosarcina mazei (strain ATCC BAA-159 / DSM 3647 / Goe1 / Go1 / JCM 11833 / OCM 88) (Methanosarcina frisia) protein is Glutamate N-acetyltransferase.